A 336-amino-acid chain; its full sequence is MTTATAFEIRTLTPHPTLEYWSVCKIEALFETPFLDLVYRAAQVHRENFNPKAIQLSTLMSIKTGGCPEDCGYCPQSARYHTGVEKQQLLDVEEIVEKAKIAKARGAGRFCMGAAWRGPKPKDIEKVTAIIKAVKELGLETCGTFGLLQDGMAEDLKEAGLDYYNHNLDTAPEHYGNVIGTRQFDDRINTLGKVRKAGLKVCCGGIIGMNETRKERAGLIASLANLDPQPESVPINQLVKVEGTPLADAAELDWTEFVRTIAVARITMPKSYVRLSAGRQGMSEEMQAMCFMAGANSIFYGDKLLVTGNPEEDGDQRLMAKLDLEPETEENRYRAE.

In terms of domain architecture, Radical SAM core spans 52 to 279 (KAIQLSTLMS…KSYVRLSAGR (228 aa)). 3 residues coordinate [4Fe-4S] cluster: C67, C71, and C74. Positions 111, 142, 202, and 274 each coordinate [2Fe-2S] cluster.

This sequence belongs to the radical SAM superfamily. Biotin synthase family. As to quaternary structure, homodimer. It depends on [4Fe-4S] cluster as a cofactor. The cofactor is [2Fe-2S] cluster.

The catalysed reaction is (4R,5S)-dethiobiotin + (sulfur carrier)-SH + 2 reduced [2Fe-2S]-[ferredoxin] + 2 S-adenosyl-L-methionine = (sulfur carrier)-H + biotin + 2 5'-deoxyadenosine + 2 L-methionine + 2 oxidized [2Fe-2S]-[ferredoxin]. The protein operates within cofactor biosynthesis; biotin biosynthesis; biotin from 7,8-diaminononanoate: step 2/2. Its function is as follows. Catalyzes the conversion of dethiobiotin (DTB) to biotin by the insertion of a sulfur atom into dethiobiotin via a radical-based mechanism. The protein is Biotin synthase of Pasteurella multocida (strain Pm70).